The primary structure comprises 628 residues: DNA-directed RNA polymerase subunit gamma (628 aa).

The Zn(2+) site is built by Cys-71, Cys-73, Cys-86, and Cys-89. The Mg(2+) site is built by Asp-467, Asp-469, and Asp-471.

This sequence belongs to the RNA polymerase beta' chain family. RpoC1 subfamily. As to quaternary structure, in cyanobacteria the RNAP catalytic core is composed of 2 alpha, 1 beta, 1 beta', 1 gamma and 1 omega subunit. When a sigma factor is associated with the core the holoenzyme is formed, which can initiate transcription. Mg(2+) serves as cofactor. The cofactor is Zn(2+).

It catalyses the reaction RNA(n) + a ribonucleoside 5'-triphosphate = RNA(n+1) + diphosphate. In terms of biological role, DNA-dependent RNA polymerase catalyzes the transcription of DNA into RNA using the four ribonucleoside triphosphates as substrates. This Crocosphaera subtropica (strain ATCC 51142 / BH68) (Cyanothece sp. (strain ATCC 51142)) protein is DNA-directed RNA polymerase subunit gamma.